The following is a 160-amino-acid chain: MKIYTQRLEDISPDQAFETVELTFDTRQKSRFRAALASGVDIGADLPRTGILRSGSYIATQEGDVLRVDAKPERLMKVTAQTEFDLLKAAYHLGNRHVPLMLTPTALYFEPDHVLAEMVEGLGLTVTETDHPFEPESGAYAQHSHDHRLSPIKVLHHVHS.

The protein belongs to the UreE family.

It localises to the cytoplasm. Its function is as follows. Involved in urease metallocenter assembly. Binds nickel. Probably functions as a nickel donor during metallocenter assembly. The chain is Urease accessory protein UreE from Acinetobacter baumannii (strain ACICU).